A 337-amino-acid polypeptide reads, in one-letter code: Glyceraldehyde-3-phosphate dehydrogenase 3 (337 aa).

NAD(+) contacts are provided by residues 12–13 and Lys80; that span reads RM. Residues 152-154 and Thr183 each bind D-glyceraldehyde 3-phosphate; that span reads SCT. The active-site Nucleophile is the Cys153. Asn184 provides a ligand contact to NAD(+). D-glyceraldehyde 3-phosphate is bound by residues Arg198, 211–212, and Arg234; that span reads TG. Asn317 is an NAD(+) binding site.

Belongs to the glyceraldehyde-3-phosphate dehydrogenase family. In terms of assembly, homotetramer.

Its subcellular location is the cytoplasm. It carries out the reaction D-glyceraldehyde 3-phosphate + phosphate + NAD(+) = (2R)-3-phospho-glyceroyl phosphate + NADH + H(+). The protein operates within carbohydrate degradation; glycolysis; pyruvate from D-glyceraldehyde 3-phosphate: step 1/5. It functions in the pathway carbohydrate biosynthesis; gluconeogenesis. Functionally, catalyzes the oxidative phosphorylation of glyceraldehyde 3-phosphate (G3P) to 1,3-bisphosphoglycerate (BPG) using the cofactor NAD. The first reaction step involves the formation of a hemiacetal intermediate between G3P and a cysteine residue, and this hemiacetal intermediate is then oxidized to a thioester, with concomitant reduction of NAD to NADH. The reduced NADH is then exchanged with the second NAD, and the thioester is attacked by a nucleophilic inorganic phosphate to produce BPG. The chain is Glyceraldehyde-3-phosphate dehydrogenase 3 (gap3) from Nostoc sp. (strain PCC 7120 / SAG 25.82 / UTEX 2576).